The following is a 315-amino-acid chain: Voltage-dependent calcium channel gamma-3 subunit (315 aa).

A run of 4 helical transmembrane segments spans residues 8–28 (IQML…TIAV), 104–124 (SSVF…CVAA), 135–155 (ILSA…GIIV), and 181–201 (FGAF…HIYI). Residue Ser-248 is modified to Phosphoserine.

This sequence belongs to the PMP-22/EMP/MP20 family. CACNG subfamily. In terms of assembly, the L-type calcium channel is composed of five subunits: alpha-1, alpha-2/delta, beta and gamma. Acts as an auxiliary subunit for AMPA-selective glutamate receptors (AMPARs). Found in a complex with GRIA1, GRIA2, GRIA3, GRIA4, CNIH2, CNIH3, CACNG2, CACNG4, CACNG5, CACNG7 and CACNG8. Interacts with AP4M1 and GRIA1; associates GRIA1 with the adaptor protein complex 4 (AP-4) to target GRIA1 to the somatodendritic compartment of neurons.

Its subcellular location is the membrane. Regulates the trafficking to the somatodendritic compartment and gating properties of AMPA-selective glutamate receptors (AMPARs). Promotes their targeting to the cell membrane and synapses and modulates their gating properties by slowing their rates of activation, deactivation and desensitization. Does not show subunit-specific AMPA receptor regulation and regulates all AMPAR subunits. Thought to stabilize the calcium channel in an inactivated (closed) state. In Homo sapiens (Human), this protein is Voltage-dependent calcium channel gamma-3 subunit (CACNG3).